Consider the following 946-residue polypeptide: Leucine--tRNA ligase (946 aa).

Positions 43–53 (PYPNGTIHIGH) match the 'HIGH' region motif. Positions 638–642 (KMSKS) match the 'KMSKS' region motif. Residue Lys-641 coordinates ATP.

This sequence belongs to the class-I aminoacyl-tRNA synthetase family.

It is found in the cytoplasm. The catalysed reaction is tRNA(Leu) + L-leucine + ATP = L-leucyl-tRNA(Leu) + AMP + diphosphate. The sequence is that of Leucine--tRNA ligase from Pyrobaculum calidifontis (strain DSM 21063 / JCM 11548 / VA1).